The sequence spans 524 residues: AAA ATPase forming ring-shaped complexes (524 aa).

The interval 1–29 (MGMGQEKHTDAASQSRDPEAVAAHENDQL) is disordered. The stretch at 22 to 59 (AAHENDQLRQRNHALAKALTRATEELRKAKAQLEQFMA) forms a coiled coil. Position 250-255 (250-255 (GNGKTL)) interacts with ATP.

The protein belongs to the AAA ATPase family. In terms of assembly, homohexamer. Assembles into a hexameric ring structure.

The polypeptide is AAA ATPase forming ring-shaped complexes (Bifidobacterium animalis subsp. lactis (strain BB-12)).